The sequence spans 382 residues: Alanine racemase (382 aa).

Lys37 functions as the Proton acceptor; specific for D-alanine in the catalytic mechanism. The residue at position 37 (Lys37) is an N6-(pyridoxal phosphate)lysine. Arg135 contributes to the substrate binding site. Tyr267 serves as the catalytic Proton acceptor; specific for L-alanine. Met315 is a binding site for substrate.

The protein belongs to the alanine racemase family. Pyridoxal 5'-phosphate is required as a cofactor.

It catalyses the reaction L-alanine = D-alanine. It participates in amino-acid biosynthesis; D-alanine biosynthesis; D-alanine from L-alanine: step 1/1. Catalyzes the interconversion of L-alanine and D-alanine. May also act on other amino acids. This Geobacter sulfurreducens (strain ATCC 51573 / DSM 12127 / PCA) protein is Alanine racemase (alr).